The chain runs to 348 residues: MARPMGKLPSNTRKCAQCAMAEALLEIAGQTINQKDLGRSGRMTRTDNDTWDLASSVGATATMIATARALASRAENPLINDPFAEPLVRAVGIDLFTRLASGELRLEDIGDHATGGRWMIDNIAIRTKFYDDFFGDATTAGIRQVVILAAGLDTRAYRLPWPPGTVVYEIDQPAVIKFKTRALANLNAEPNAERHAVAVDLRNDWPTALKNAGFDPARPTAFSAEGLLSYLPPQGQDRLLDAITALSAPDSRLATQSPLVLDLAEEDEKKMRMKSAAEAWRERGFDLDLTELIYFDQRNDVADYLAGSGWQVTTSTGKELFAAQGLPPFADDHITRFADRRYISAVLK.

Residues Asp-171 and 200-201 (DL) each bind S-adenosyl-L-methionine.

It belongs to the UPF0677 family.

Exhibits S-adenosyl-L-methionine-dependent methyltransferase activity. In Mycobacterium tuberculosis (strain ATCC 25177 / H37Ra), this protein is Putative S-adenosyl-L-methionine-dependent methyltransferase MRA_3439.